Here is a 318-residue protein sequence, read N- to C-terminus: MKPLNIIFAGTPDFAARHLQALLNSHHNVIGVYTQPDRPAGRGKKLTASPVKELAVGNNIPVYQPGSLRKEPAQQELAALNADIMVVVAYGLILPKVVLNTPRLGCINVHGSILPRWRGAAPIQRALWAGDKETGVTVMQMDVGLDTGDMLLKTTLPIEDSDTSASLYEKLAEQGPVALLQALEGLANGTLAAEKQDEALANYAEKLSKEEARLDWNKSAQQLWQEVRAFNPWPVSYFEHQGNTIKVWQTQVSETTSTAAPGTIISASKKGIEVATADGVLTLLNMQLPGKKPLNVADILNARGEWFSPNTRLANEAQ.

Ser-112 to Pro-115 is a binding site for (6S)-5,6,7,8-tetrahydrofolate.

The protein belongs to the Fmt family.

The enzyme catalyses L-methionyl-tRNA(fMet) + (6R)-10-formyltetrahydrofolate = N-formyl-L-methionyl-tRNA(fMet) + (6S)-5,6,7,8-tetrahydrofolate + H(+). In terms of biological role, attaches a formyl group to the free amino group of methionyl-tRNA(fMet). The formyl group appears to play a dual role in the initiator identity of N-formylmethionyl-tRNA by promoting its recognition by IF2 and preventing the misappropriation of this tRNA by the elongation apparatus. This chain is Methionyl-tRNA formyltransferase, found in Shewanella baltica (strain OS185).